The primary structure comprises 342 residues: N-acetyl-gamma-glutamyl-phosphate reductase (342 aa).

The active site involves cysteine 149.

It belongs to the NAGSA dehydrogenase family. Type 1 subfamily.

It localises to the cytoplasm. It catalyses the reaction N-acetyl-L-glutamate 5-semialdehyde + phosphate + NADP(+) = N-acetyl-L-glutamyl 5-phosphate + NADPH + H(+). It functions in the pathway amino-acid biosynthesis; L-arginine biosynthesis; N(2)-acetyl-L-ornithine from L-glutamate: step 3/4. Its function is as follows. Catalyzes the NADPH-dependent reduction of N-acetyl-5-glutamyl phosphate to yield N-acetyl-L-glutamate 5-semialdehyde. The protein is N-acetyl-gamma-glutamyl-phosphate reductase of Thiobacillus denitrificans (strain ATCC 25259 / T1).